A 277-amino-acid polypeptide reads, in one-letter code: Large ribosomal subunit protein uL2 (277 aa).

The tract at residues 219–277 (RPQTRGSAMNPVDHPHGGGEGKKNSGRHPVTPWGKPTKGAKTRRKKASDKLIISRRKGK) is disordered. Residues 231 to 241 (DHPHGGGEGKK) show a composition bias toward basic and acidic residues. A compositionally biased stretch (basic residues) spans 256–277 (KGAKTRRKKASDKLIISRRKGK).

The protein belongs to the universal ribosomal protein uL2 family. Part of the 50S ribosomal subunit. Forms a bridge to the 30S subunit in the 70S ribosome.

In terms of biological role, one of the primary rRNA binding proteins. Required for association of the 30S and 50S subunits to form the 70S ribosome, for tRNA binding and peptide bond formation. It has been suggested to have peptidyltransferase activity; this is somewhat controversial. Makes several contacts with the 16S rRNA in the 70S ribosome. The chain is Large ribosomal subunit protein uL2 from Campylobacter concisus (strain 13826).